Here is a 296-residue protein sequence, read N- to C-terminus: Phosphatidylglycerol--prolipoprotein diacylglyceryl transferase (296 aa).

Transmembrane regions (helical) follow at residues 10–30 (IAFS…LAAF), 57–77 (LLFY…MLFY), 92–112 (VWEG…ACWL), and 119–139 (LHFF…LGFG). R140 serves as a coordination point for a 1,2-diacyl-sn-glycero-3-phospho-(1'-sn-glycerol). The next 3 membrane-spanning stretches (helical) occupy residues 194-214 (QLYE…TFSM), 220-240 (YAVS…VEFV), and 254-274 (WLTM…VLLA).

The protein belongs to the Lgt family.

The protein localises to the cell inner membrane. The catalysed reaction is L-cysteinyl-[prolipoprotein] + a 1,2-diacyl-sn-glycero-3-phospho-(1'-sn-glycerol) = an S-1,2-diacyl-sn-glyceryl-L-cysteinyl-[prolipoprotein] + sn-glycerol 1-phosphate + H(+). The protein operates within protein modification; lipoprotein biosynthesis (diacylglyceryl transfer). Its function is as follows. Catalyzes the transfer of the diacylglyceryl group from phosphatidylglycerol to the sulfhydryl group of the N-terminal cysteine of a prolipoprotein, the first step in the formation of mature lipoproteins. This Xanthomonas euvesicatoria pv. vesicatoria (strain 85-10) (Xanthomonas campestris pv. vesicatoria) protein is Phosphatidylglycerol--prolipoprotein diacylglyceryl transferase.